The primary structure comprises 387 residues: Succinate--CoA ligase [ADP-forming] subunit beta (387 aa).

In terms of domain architecture, ATP-grasp spans 9–245; it reads KDLLESYGLK…KSQENAKELK (237 aa). ATP contacts are provided by residues Lys46, 53 to 55, Glu100, Tyr103, and Glu108; that span reads GRG. Mg(2+) contacts are provided by Asn200 and Asp214. Residues Asn265 and 322 to 324 contribute to the substrate site; that span reads GIV.

The protein belongs to the succinate/malate CoA ligase beta subunit family. As to quaternary structure, heterotetramer of two alpha and two beta subunits. Mg(2+) serves as cofactor.

It catalyses the reaction succinate + ATP + CoA = succinyl-CoA + ADP + phosphate. It carries out the reaction GTP + succinate + CoA = succinyl-CoA + GDP + phosphate. It functions in the pathway carbohydrate metabolism; tricarboxylic acid cycle; succinate from succinyl-CoA (ligase route): step 1/1. Functionally, succinyl-CoA synthetase functions in the citric acid cycle (TCA), coupling the hydrolysis of succinyl-CoA to the synthesis of either ATP or GTP and thus represents the only step of substrate-level phosphorylation in the TCA. The beta subunit provides nucleotide specificity of the enzyme and binds the substrate succinate, while the binding sites for coenzyme A and phosphate are found in the alpha subunit. The polypeptide is Succinate--CoA ligase [ADP-forming] subunit beta (Francisella tularensis subsp. holarctica (strain OSU18)).